The primary structure comprises 116 residues: Ribonuclease P protein component (116 aa).

This sequence belongs to the RnpA family. Consists of a catalytic RNA component (M1 or rnpB) and a protein subunit.

The enzyme catalyses Endonucleolytic cleavage of RNA, removing 5'-extranucleotides from tRNA precursor.. RNaseP catalyzes the removal of the 5'-leader sequence from pre-tRNA to produce the mature 5'-terminus. It can also cleave other RNA substrates such as 4.5S RNA. The protein component plays an auxiliary but essential role in vivo by binding to the 5'-leader sequence and broadening the substrate specificity of the ribozyme. This Carboxydothermus hydrogenoformans (strain ATCC BAA-161 / DSM 6008 / Z-2901) protein is Ribonuclease P protein component.